The primary structure comprises 325 residues: Protein ORANGE-GREEN, chloroplastic (325 aa).

The transit peptide at 1–54 (MDRVLVASYPINHLIRPHSFRIDYCWSTCFTSRLNSGKERQKLSSRWRWRSMAS) directs the protein to the chloroplast. A compositionally biased stretch (low complexity) spans 53 to 71 (ASDSTDSSSSSSFAPSVES). The tract at residues 53-77 (ASDSTDSSSSSSFAPSVESDPSDKT) is disordered. 2 helical membrane passes run 164 to 184 (LYYV…GLLA) and 217 to 237 (IVAS…VVEV). Residues 226–317 (VGVISALMVV…CTGMAMASEH (92 aa)) are CR-type-like. Residues 248-255 (CKYCLGTG) form a CXXCXGXG motif repeat. The stretch at 259-266 (CARCSNTG) is one CXXCXXXG motif repeat. The stretch at 292–299 (CQNCSGSG) is one CXXCXGXG motif repeat. The CXXCXXXG motif repeat unit spans residues 303–310 (CPTCLCTG).

Belongs to the orange-like family.

It localises to the plastid. The protein localises to the chloroplast membrane. Involved in chloroplast differentiation in fruit flesh. In Cucumis melo (Muskmelon), this protein is Protein ORANGE-GREEN, chloroplastic.